The chain runs to 405 residues: Patatin-like protein 2 (405 aa).

The region spanning 24-230 (LSIDGGGVRG…AANNPTLCAM (207 aa)) is the PNPLA domain. A GXGXXG motif is present at residues 28-33 (GGGVRG). The GXSXG signature appears at 66-70 (GTSTG). Catalysis depends on S68, which acts as the Nucleophile. Catalysis depends on D217, which acts as the Proton acceptor. Positions 217-219 (DGG) match the DGA/G motif.

This sequence belongs to the patatin family.

Its function is as follows. Possesses non-specific lipolytic acyl hydrolase (LAH) activity. Hydrolyzes phospholipids as well as galactolipids. May play a role in disease resistance. The chain is Patatin-like protein 2 (PLP2) from Oryza sativa subsp. indica (Rice).